The sequence spans 160 residues: N-acetyltransferase Pat (160 aa).

Residues 5-148 (IKIRKATKED…VYGEMRLTER (144 aa)) enclose the N-acetyltransferase domain. CoA contacts are provided by L79, V81, T87, G89, G91, T92, N118, K123, and K127.

It belongs to the acetyltransferase family. GNAT subfamily.

The enzyme catalyses L-lysyl-[protein] + acetyl-CoA = N(6)-acetyl-L-lysyl-[protein] + CoA + H(+). In terms of biological role, modulates activity of albA1, the major archaeal DNA compaction protein, by decreasing albA1's nucleic acid binding affinity through acetylation of 'Lys-16'. In Saccharolobus solfataricus (strain ATCC 35092 / DSM 1617 / JCM 11322 / P2) (Sulfolobus solfataricus), this protein is N-acetyltransferase Pat.